The following is a 430-amino-acid chain: MKTQMNYAKEGIFTKEMQIVAQKENLSKDFLLENIACGKIIIPANINHKSLDPNGIGFGLRTKVNVNLGVSNDCVDYSEEMKKVELAHKFGIEAIMDLSNYGKTSRFRDELVNVSKAMIGTVPVYDAVGFLEKDLKQINAKDFLDVVYHHAKSGVDFMTIHAGINSRAAHIFKQSKRLTNIVSRGGSVLYAWMMMKDAENPFFEYYDDLLDICLKYDVTLSLGDALRPGSTHDASDGAQISELIELSLLTQRAWDVGIQVMIEGPGHMAINEIEANMQLEKRLCKGAPFYVLGPLVIDIGAGYDHISGAIGGAVAAASGADMLCYVTPAEHLRLPNLEDVREGIVATKIAAHAGDIAKLPKERARDDEMSKARQEIDWEKMFKLAIDGEKAKKMFNERRPDDLNSCSMCGKMCAMNTMNQILKGEDVSLA.

Residues N67, M96, Y125, H161, 183–185 (SRG), 224–227 (DALR), and E263 each bind substrate. H267 lines the Zn(2+) pocket. Y290 contacts substrate. Residue H331 coordinates Zn(2+). Residues C406, C409, and C413 each coordinate [4Fe-4S] cluster.

Belongs to the ThiC family. Homodimer. It depends on [4Fe-4S] cluster as a cofactor.

It catalyses the reaction 5-amino-1-(5-phospho-beta-D-ribosyl)imidazole + S-adenosyl-L-methionine = 4-amino-2-methyl-5-(phosphooxymethyl)pyrimidine + CO + 5'-deoxyadenosine + formate + L-methionine + 3 H(+). Its pathway is cofactor biosynthesis; thiamine diphosphate biosynthesis. Its function is as follows. Catalyzes the synthesis of the hydroxymethylpyrimidine phosphate (HMP-P) moiety of thiamine from aminoimidazole ribotide (AIR) in a radical S-adenosyl-L-methionine (SAM)-dependent reaction. The polypeptide is Phosphomethylpyrimidine synthase (Campylobacter jejuni subsp. jejuni serotype O:23/36 (strain 81-176)).